A 566-amino-acid chain; its full sequence is DBIRD complex subunit ZNF326 (566 aa).

Disordered stretches follow at residues 19–81 (HCGV…ESYD) and 145–180 (RPGFMEDRGRESYSSYSSFSSPHMKPAPVGSRGRGT). Residues 59-73 (SHGGGGGGGGGGGNR) are compositionally biased toward gly residues. Residues 156–165 (SYSSYSSFSS) show a composition bias toward low complexity. The Bipartite nuclear localization signal motif lies at 240–263 (KRKMMPQPYNKPGGTFIKKPKMTK). Residues 314–347 (FGDSKGEGKSEEEEKRRIEARREKQRRRREKNSE) form a disordered region. The segment covering 317-335 (SKGEGKSEEEEKRRIEARR) has biased composition (basic and acidic residues). C2H2 AKAP95-type zinc fingers lie at residues 359–381 (CSFCKFRTFEEKEIESHLESAAH) and 452–475 (CSACSVYVPALHSSVQQHLKSPDH). Positions 516-566 (PFEINDQAQEQQTEEEDKAEEPAEGEEEEEEEEEEETEEQTDFTLDHTEDN) are disordered. Acidic residues predominate over residues 527–556 (QTEEEDKAEEPAEGEEEEEEEEEEETEEQT).

Belongs to the AKAP95 family. Component of the DBIRD complex.

It is found in the nucleus. Functionally, core component of the DBIRD complex, a multiprotein complex that acts at the interface between core mRNP particles and RNA polymerase II (RNAPII) and integrates transcript elongation with the regulation of alternative splicing. This is DBIRD complex subunit ZNF326 (ZNF326) from Gallus gallus (Chicken).